The following is a 418-amino-acid chain: ATP phosphoribosyltransferase regulatory subunit (418 aa).

This sequence belongs to the class-II aminoacyl-tRNA synthetase family. HisZ subfamily. Heteromultimer composed of HisG and HisZ subunits.

It is found in the cytoplasm. Its pathway is amino-acid biosynthesis; L-histidine biosynthesis; L-histidine from 5-phospho-alpha-D-ribose 1-diphosphate: step 1/9. Functionally, required for the first step of histidine biosynthesis. May allow the feedback regulation of ATP phosphoribosyltransferase activity by histidine. The polypeptide is ATP phosphoribosyltransferase regulatory subunit (Acetivibrio thermocellus (strain ATCC 27405 / DSM 1237 / JCM 9322 / NBRC 103400 / NCIMB 10682 / NRRL B-4536 / VPI 7372) (Clostridium thermocellum)).